The following is a 406-amino-acid chain: Probable endo-xylogalacturonan hydrolase A (406 aa).

Positions 1–18 (MISLNSIFLLSLVGLSRA) are cleaved as a signal peptide. A disordered region spans residues 20–49 (PSRSETSPDRTIKPRAACTPTAGGSSSTDD). 6 PbH1 repeats span residues 183–213 (TSNA…DIGA), 214–235 (STYV…AFKP), 237–257 (ANYV…SVGS), 266–289 (VQNV…KTYP), 299–320 (VKNA…QIQS), and 368–390 (TCDV…ILCG). The active-site Proton donor is the Asp228. N-linked (GlcNAc...) asparagine glycosylation is present at Asn244. His251 is an active-site residue. 3 N-linked (GlcNAc...) asparagine glycosylation sites follow: Asn273, Asn278, and Asn301.

Belongs to the glycosyl hydrolase 28 family.

It is found in the secreted. In terms of biological role, pectinolytic enzyme involved in the degradation of xylogalacturonan (xga), a galacturonan backbone heavily substituted with xylose, and which is one important component of the hairy regions of pectin. Activity requires a galacturonic acid backbone substituted with xylose. The chain is Probable endo-xylogalacturonan hydrolase A (xghA) from Aspergillus flavus (strain ATCC 200026 / FGSC A1120 / IAM 13836 / NRRL 3357 / JCM 12722 / SRRC 167).